Here is a 137-residue protein sequence, read N- to C-terminus: Peptide methionine sulfoxide reductase MsrB (137 aa).

The region spanning alanine 7–glutamate 129 is the MsrB domain. Zn(2+) contacts are provided by cysteine 46, cysteine 49, cysteine 95, and cysteine 98. Cysteine 118 (nucleophile) is an active-site residue.

This sequence belongs to the MsrB Met sulfoxide reductase family. Zn(2+) serves as cofactor.

The enzyme catalyses L-methionyl-[protein] + [thioredoxin]-disulfide + H2O = L-methionyl-(R)-S-oxide-[protein] + [thioredoxin]-dithiol. This chain is Peptide methionine sulfoxide reductase MsrB, found in Salmonella dublin (strain CT_02021853).